Here is an 87-residue protein sequence, read N- to C-terminus: SGAEVFGNNCSSCHVNGGNIIIPGHVLSQSAMEEYLDGGYTKEAIEYQVRNGKGPMPAWEGVLDESEIKEVTDYVYSQASGPWANAS.

Heme c-binding residues include Cys10, Cys13, His14, and Met56.

This sequence belongs to the cytochrome c family. PetJ subfamily. In terms of assembly, monomer. In terms of processing, binds 1 heme c group covalently per subunit.

The protein localises to the plastid. It localises to the chloroplast thylakoid lumen. Its function is as follows. Functions as an electron carrier between membrane-bound cytochrome b6-f and photosystem I in oxygenic photosynthesis. In Euglena viridis (Cercaria viridis), this protein is Cytochrome c6 (petJ).